We begin with the raw amino-acid sequence, 93 residues long: Pyrimidine/purine nucleoside phosphorylase (93 aa).

The protein belongs to the nucleoside phosphorylase PpnP family.

It catalyses the reaction a purine D-ribonucleoside + phosphate = a purine nucleobase + alpha-D-ribose 1-phosphate. The catalysed reaction is adenosine + phosphate = alpha-D-ribose 1-phosphate + adenine. The enzyme catalyses cytidine + phosphate = cytosine + alpha-D-ribose 1-phosphate. It carries out the reaction guanosine + phosphate = alpha-D-ribose 1-phosphate + guanine. It catalyses the reaction inosine + phosphate = alpha-D-ribose 1-phosphate + hypoxanthine. The catalysed reaction is thymidine + phosphate = 2-deoxy-alpha-D-ribose 1-phosphate + thymine. The enzyme catalyses uridine + phosphate = alpha-D-ribose 1-phosphate + uracil. It carries out the reaction xanthosine + phosphate = alpha-D-ribose 1-phosphate + xanthine. Its function is as follows. Catalyzes the phosphorolysis of diverse nucleosides, yielding D-ribose 1-phosphate and the respective free bases. Can use uridine, adenosine, guanosine, cytidine, thymidine, inosine and xanthosine as substrates. Also catalyzes the reverse reactions. This is Pyrimidine/purine nucleoside phosphorylase from Pseudomonas paraeruginosa (strain DSM 24068 / PA7) (Pseudomonas aeruginosa (strain PA7)).